Here is a 308-residue protein sequence, read N- to C-terminus: Elongation factor Ts (308 aa).

The segment at 80 to 83 (TDFV) is involved in Mg(2+) ion dislocation from EF-Tu.

It belongs to the EF-Ts family.

It is found in the cytoplasm. Functionally, associates with the EF-Tu.GDP complex and induces the exchange of GDP to GTP. It remains bound to the aminoacyl-tRNA.EF-Tu.GTP complex up to the GTP hydrolysis stage on the ribosome. In Rhizobium etli (strain ATCC 51251 / DSM 11541 / JCM 21823 / NBRC 15573 / CFN 42), this protein is Elongation factor Ts.